Consider the following 236-residue polypeptide: Pyridoxal 5'-phosphate synthase subunit PdxT (236 aa).

L-glutamine is bound at residue 61–63 (GES). C93 acts as the Nucleophile in catalysis. L-glutamine contacts are provided by residues R127 and 163-164 (IR). Active-site charge relay system residues include H215 and E217.

This sequence belongs to the glutaminase PdxT/SNO family. As to quaternary structure, in the presence of PdxS, forms a dodecamer of heterodimers. Only shows activity in the heterodimer.

It carries out the reaction aldehydo-D-ribose 5-phosphate + D-glyceraldehyde 3-phosphate + L-glutamine = pyridoxal 5'-phosphate + L-glutamate + phosphate + 3 H2O + H(+). The catalysed reaction is L-glutamine + H2O = L-glutamate + NH4(+). It functions in the pathway cofactor biosynthesis; pyridoxal 5'-phosphate biosynthesis. Its function is as follows. Catalyzes the hydrolysis of glutamine to glutamate and ammonia as part of the biosynthesis of pyridoxal 5'-phosphate. The resulting ammonia molecule is channeled to the active site of PdxS. The chain is Pyridoxal 5'-phosphate synthase subunit PdxT from Arthrobacter sp. (strain FB24).